Consider the following 332-residue polypeptide: 2,3-diketo-L-gulonate reductase (332 aa).

His-44 (proton donor) is an active-site residue. Residues 168–174 (ITMVDMS), 224–225 (WK), and 304–306 (GHE) each bind NAD(+).

This sequence belongs to the LDH2/MDH2 oxidoreductase family. DlgD subfamily. In terms of assembly, homodimer.

The protein resides in the cytoplasm. The catalysed reaction is 3-dehydro-L-gulonate + NAD(+) = 2,3-dioxo-L-gulonate + NADH + H(+). It catalyses the reaction 3-dehydro-L-gulonate + NADP(+) = 2,3-dioxo-L-gulonate + NADPH + H(+). Catalyzes the reduction of 2,3-diketo-L-gulonate in the presence of NADH, to form 3-keto-L-gulonate. This Escherichia fergusonii (strain ATCC 35469 / DSM 13698 / CCUG 18766 / IAM 14443 / JCM 21226 / LMG 7866 / NBRC 102419 / NCTC 12128 / CDC 0568-73) protein is 2,3-diketo-L-gulonate reductase.